A 339-amino-acid polypeptide reads, in one-letter code: Phospho-N-acetylmuramoyl-pentapeptide-transferase (339 aa).

Transmembrane regions (helical) follow at residues Thr4–Ile24, Met53–Leu73, Ala80–Leu100, Gly113–Val133, Leu145–Val165, Gly176–Ala196, Phe202–Asn222, Val228–Thr248, Trp253–Val273, and Val318–Tyr338.

It belongs to the glycosyltransferase 4 family. MraY subfamily. The cofactor is Mg(2+).

Its subcellular location is the cell membrane. The enzyme catalyses UDP-N-acetyl-alpha-D-muramoyl-L-alanyl-gamma-D-glutamyl-L-lysyl-D-alanyl-D-alanine + di-trans,octa-cis-undecaprenyl phosphate = Mur2Ac(oyl-L-Ala-gamma-D-Glu-L-Lys-D-Ala-D-Ala)-di-trans,octa-cis-undecaprenyl diphosphate + UMP. Its pathway is cell wall biogenesis; peptidoglycan biosynthesis. Catalyzes the initial step of the lipid cycle reactions in the biosynthesis of the cell wall peptidoglycan: transfers peptidoglycan precursor phospho-MurNAc-pentapeptide from UDP-MurNAc-pentapeptide onto the lipid carrier undecaprenyl phosphate, yielding undecaprenyl-pyrophosphoryl-MurNAc-pentapeptide, known as lipid I. The protein is Phospho-N-acetylmuramoyl-pentapeptide-transferase of Streptococcus mutans serotype c (strain ATCC 700610 / UA159).